The primary structure comprises 315 residues: Calumenin (315 aa).

A signal peptide spans 1-19 (MDLRQFLMCLSLCTAFALS). Phosphotyrosine is present on Tyr-47. Thr-65 bears the Phosphothreonine mark. 6 consecutive EF-hand domains span residues 68 to 103 (ESKEKLGMIVDKIDTDKDGFVTEGELKSRIKHAQKK), 104 to 139 (YIYDNVENQWQEFDMNQDGLISWDEYRNVTYGTYLD), 151 to 186 (PIMVRDERRFKMADQDGDLIATKEEFTAFLHPEEYD), 188 to 223 (MKDIVLQETMEDIDQNADGFIDLEEYIGDMYSHDGN), 229 to 264 (WVKTEREQFVEFRDKNRDGKMDKEETKDWILPSDYD), and 265 to 300 (HAEAEARHLVYESDQDKDGKLTKEEIVDKYDLFVGS). Residue Ser-69 is modified to Phosphoserine. Ca(2+) contacts are provided by Asp-81, Asp-83, Asp-85, Glu-92, Asp-117, Asn-119, Asp-121, and Glu-128. A glycan (N-linked (GlcNAc...) asparagine) is linked at Asn-131. Ca(2+)-binding residues include Asp-164, Asp-166, Asp-168, Glu-175, Asp-201, Asn-203, Asp-205, Glu-212, Asp-242, Asn-244, Asp-246, Lys-248, and Glu-253. A Phosphothreonine modification is found at Thr-254. Residues Ser-261 and Ser-277 each carry the phosphoserine modification. 5 residues coordinate Ca(2+): Asp-278, Asp-280, Asp-282, Lys-284, and Glu-289. A Prevents secretion from ER motif is present at residues 312 to 315 (HDEF).

The protein belongs to the CREC family. In terms of assembly, binds crotoxin. Interacts with GGCX.

It localises to the endoplasmic reticulum membrane. The protein resides in the golgi apparatus. It is found in the secreted. The protein localises to the melanosome. Its subcellular location is the sarcoplasmic reticulum lumen. Its function is as follows. Involved in regulation of vitamin K-dependent carboxylation of multiple N-terminal glutamate residues. Seems to inhibit gamma-carboxylase GGCX. Binds 7 calcium ions with a low affinity. This is Calumenin (Calu) from Rattus norvegicus (Rat).